Reading from the N-terminus, the 388-residue chain is Nocturnin (388 aa).

Glu152 serves as a coordination point for Mg(2+). Substrate contacts are provided by residues Glu152, 176-178, Asn220, 243-246, 281-283, and His371; these read KPW, HLKA, and DFN.

It belongs to the CCR4/nocturin family. The cofactor is Mg(2+). In terms of tissue distribution, expressed only in the photoreceptors of the retina. Expression is controlled by the retinal circadian clock.

Its subcellular location is the cytoplasm. It is found in the nucleus. The protein resides in the perinuclear region. It localises to the mitochondrion. The enzyme catalyses NADP(+) + H2O = phosphate + NAD(+). It carries out the reaction NADPH + H2O = phosphate + NADH. Functionally, phosphatase which catalyzes the conversion of NADP(+) to NAD(+) and of NADPH to NADH. Shows a small preference for NADPH over NADP(+). Component of the circadian clock or downstream effector of clock function. Exhibits a high amplitude circadian rhythm with maximal levels in early evening. In constant darkness or constant light, the amplitude of the rhythm decreases. The polypeptide is Nocturnin (Xenopus laevis (African clawed frog)).